Here is a 39-residue protein sequence, read N- to C-terminus: Large ribosomal subunit protein bL36 (39 aa).

It belongs to the bacterial ribosomal protein bL36 family.

This Lactiplantibacillus plantarum (strain ATCC BAA-793 / NCIMB 8826 / WCFS1) (Lactobacillus plantarum) protein is Large ribosomal subunit protein bL36.